The chain runs to 270 residues: Centromere protein Q (270 aa).

Residues 1 to 59 form a disordered region; the sequence is MSGKANTSKKKSQRVKRNVKQRADKEDEELDSPENKVGNRAKRNRSHAGHLSSKEQTKC. Composition is skewed to basic residues over residues 7 to 20 and 39 to 48; these read TSKKKSQRVKRNVK and NRAKRNRSHA. Serine 52 is modified (phosphoserine). Positions 143 to 205 form a coiled coil; the sequence is LKVEREQERA…EEEMKEVFHI (63 aa).

Belongs to the CENP-Q/OKP1 family. In terms of assembly, component of the CENPA-CAD complex, composed of CENPI, CENPK, CENPL, CENPO, CENPP, CENPQ, CENPR and CENPS. The CENPA-CAD complex interacts with the CENPA-NAC complex, at least composed of CENPA, CENPC, CENPH, CENPM, CENPN, CENPT and CENPU. In terms of processing, phosphorylation at Ser-52 is essential for CENPE recruitment to kinetochores and orderly chromosome congression.

Its subcellular location is the nucleus. It is found in the chromosome. The protein resides in the centromere. In terms of biological role, component of the CENPA-CAD (nucleosome distal) complex, a complex recruited to centromeres which is involved in assembly of kinetochore proteins, mitotic progression and chromosome segregation. May be involved in incorporation of newly synthesized CENPA into centromeres via its interaction with the CENPA-NAC complex. Plays an important role in chromosome congression and in the recruitment of CENP-O complex (which comprises CENPO, CENPP, CENPQ and CENPU), CENPE and PLK1 to the kinetochores. The protein is Centromere protein Q (Cenpq) of Rattus norvegicus (Rat).